We begin with the raw amino-acid sequence, 482 residues long: 3-isopropylmalate dehydratase large subunit (482 aa).

Residues 60–79 are disordered; that stretch reads ATPDHNVPTTRAERQGGLES. Positions 353, 414, and 417 each coordinate [4Fe-4S] cluster.

It belongs to the aconitase/IPM isomerase family. LeuC type 1 subfamily. In terms of assembly, heterodimer of LeuC and LeuD. Requires [4Fe-4S] cluster as cofactor.

It catalyses the reaction (2R,3S)-3-isopropylmalate = (2S)-2-isopropylmalate. It functions in the pathway amino-acid biosynthesis; L-leucine biosynthesis; L-leucine from 3-methyl-2-oxobutanoate: step 2/4. Catalyzes the isomerization between 2-isopropylmalate and 3-isopropylmalate, via the formation of 2-isopropylmaleate. This is 3-isopropylmalate dehydratase large subunit from Xanthomonas euvesicatoria pv. vesicatoria (strain 85-10) (Xanthomonas campestris pv. vesicatoria).